We begin with the raw amino-acid sequence, 377 residues long: Peptide chain release factor 2 (377 aa).

Gln257 carries the N5-methylglutamine modification.

It belongs to the prokaryotic/mitochondrial release factor family. In terms of processing, methylated by PrmC. Methylation increases the termination efficiency of RF2.

Its subcellular location is the cytoplasm. Its function is as follows. Peptide chain release factor 2 directs the termination of translation in response to the peptide chain termination codons UGA and UAA. This Lactiplantibacillus plantarum (strain ATCC BAA-793 / NCIMB 8826 / WCFS1) (Lactobacillus plantarum) protein is Peptide chain release factor 2.